The chain runs to 473 residues: Azaphilone pigments biosynthesis cluster protein L (473 aa).

The signal sequence occupies residues 1–23 (MAELSIASGIVGLLSLGIQVTQS). ANK repeat units lie at residues 403–432 (EYGNALQAASSGGHWKVVQMLLDQGADVNA) and 436–465 (RYGNALHAASSRGHKKVVQMLLDHGANVST). N-linked (GlcNAc...) asparagine glycosylation occurs at Asn-462.

In terms of biological role, part of the gene cluster that mediates the biosynthesis of azaphilone pigments (MonAzPs), a complex mixture of compounds with a common azaphilone skeleton very widely used as food colorants. Seems not to play a direct role in the biosynthesis but might have a regulatorx function. In Monascus ruber (Mold), this protein is Azaphilone pigments biosynthesis cluster protein L.